Consider the following 194-residue polypeptide: Protein LKAAEAR1 (194 aa).

The tract at residues 1-45 (MPPPAKEGGRKGPRERSGKSAPGTAQGEERAKGAPATEPPKPGWA) is disordered. Basic and acidic residues predominate over residues 7–18 (EGGRKGPRERSG).

The polypeptide is Protein LKAAEAR1 (LKAAEAR1) (Homo sapiens (Human)).